A 129-amino-acid chain; its full sequence is Protein Turandot A2 (129 aa).

Positions 1-21 (MNSSTSLMCFALLLISPLCMG) are cleaved as a signal peptide. N-linked (GlcNAc...) asparagine glycosylation is present at N49.

Belongs to the Turandot family.

It is found in the secreted. Its function is as follows. A humoral factor that plays a role in stress tolerance; gives increased resistance to the lethal effects of bacterial challenge and stress. Regulated by the JAK/STAT pathway and NF-KB-like Relish pathway in the fat body, upd3 in the hemocytes and Mekk1 in response to septic injury and consequent immune response. In Drosophila simulans (Fruit fly), this protein is Protein Turandot A2 (TotA2).